A 773-amino-acid polypeptide reads, in one-letter code: Preaspterpenacid I synthase sttA (773 aa).

The interval 4–359 (ISDVMKHCVP…RYHRTDLATT (356 aa)) is sesterterpenoid synthase. Mg(2+) is bound at residue Asp-105. Substrate is bound at residue Asp-105. The tract at residues 211-214 (RVNE) is substrate. Asn-255 provides a ligand contact to substrate. 2 substrate regions span residues 259-263 (SFPKE) and 350-351 (RY). A geranylfarnesyl diphosphate synthase region spans residues 360–769 (AEDRATLIGK…RMMLLGMGPK (410 aa)). The interval 423–447 (AFKKRNSRNGKQNGTEGSKSTFTNG) is disordered. The segment covering 431 to 447 (NGKQNGTEGSKSTFTNG) has biased composition (polar residues). Isopentenyl diphosphate is bound by residues Lys-493, Arg-496, and His-525. The Mg(2+) site is built by Asp-532 and Asp-536. Arg-541 serves as a coordination point for dimethylallyl diphosphate. Position 542 (Arg-542) interacts with isopentenyl diphosphate. Dimethylallyl diphosphate-binding residues include Lys-614, Thr-615, Gln-652, Asn-659, and Lys-669.

This sequence in the N-terminal section; belongs to the terpene synthase family. In the C-terminal section; belongs to the FPP/GGPP synthase family.

The catalysed reaction is 4 isopentenyl diphosphate + dimethylallyl diphosphate = (2E,6E,10E,14E)-geranylfarnesyl diphosphate + 4 diphosphate. It carries out the reaction (2E,6E,10E,14E)-geranylfarnesyl diphosphate + H2O = preaspterpenacid acid I + diphosphate. The protein operates within secondary metabolite biosynthesis; terpenoid biosynthesis. Its function is as follows. Sesterterpenoid synthase; part of the gene cluster that mediates the biosynthesis of aspterpenacids. Performs both prenyl transferase and terpene cyclase activity, converting isopentenyl diphosphate and dimethylallyl diphosphate into geranylfarnesyl diphosphate (GFPP) and then converting GFPP into preaspterpenacid I. C22-oxidative modification of preaspterpenacid I by the cytochrome P450 monooxygenase sttB then leads to preaspterpenacid II. It has still to be determined how preaspterpenacid II is further modified to produce aspterpenacids. In Aspergillus terreus (strain NIH 2624 / FGSC A1156), this protein is Preaspterpenacid I synthase sttA.